A 526-amino-acid chain; its full sequence is Alpha-1,3-mannosyl-glycoprotein 4-beta-N-acetylglucosaminyltransferase A (526 aa).

The Cytoplasmic portion of the chain corresponds to 1–6 (MRLRNG). The helical; Signal-anchor for type II membrane protein transmembrane segment at 7–27 (TVATALVFVTSFLTLSWYTTW) threads the bilayer. A coiled-coil region spans residues 28–63 (QNGKEKLIAYQREFLALKERLRVAEHRISQRSSELN). Topologically, residues 28-526 (QNGKEKLIAY…NEIHIKKVTS (499 aa)) are lumenal. The N-linked (GlcNAc...) asparagine glycan is linked to Asn449. Residue Ser465 is modified to Phosphoserine.

It belongs to the glycosyltransferase 54 family. It depends on a divalent metal cation as a cofactor. Post-translationally, N-glycosylated.

The protein localises to the golgi apparatus membrane. It localises to the secreted. The enzyme catalyses N(4)-{beta-D-GlcNAc-(1-&gt;2)-alpha-D-Man-(1-&gt;3)-[beta-D-GlcNAc-(1-&gt;2)-alpha-D-Man-(1-&gt;6)]-beta-D-Man-(1-&gt;4)-beta-D-GlcNAc-(1-&gt;4)-beta-D-GlcNAc}-L-asparaginyl-[protein] + UDP-N-acetyl-alpha-D-glucosamine = N(4)-{beta-D-GlcNAc-(1-&gt;2)-[beta-D-GlcNAc-(1-&gt;4)]-alpha-D-Man-(1-&gt;3)-[beta-D-GlcNAc-(1-&gt;2)-alpha-D-Man-(1-&gt;6)]-beta-D-Man-(1-&gt;4)-beta-D-GlcNAc-(1-&gt;4)-beta-D-GlcNAc}-L-asparaginyl-[protein] + UDP + H(+). It carries out the reaction an N(4)-{beta-D-GlcNAc-(1-&gt;2)-alpha-D-Man-(1-&gt;3)-[alpha-D-Man-(1-&gt;6)]-beta-D-Man-(1-&gt;4)-beta-D-GlcNAc-(1-&gt;4)-beta-D-GlcNAc}-L-asparaginyl-[protein] + UDP-N-acetyl-alpha-D-glucosamine = an N(4)-{beta-D-GlcNAc-(1-&gt;2)-[beta-D-GlcNAc-(1-&gt;4)]-alpha-D-Man-(1-&gt;3)-[alpha-D-Man-(1-&gt;6)]-beta-D-Man-(1-&gt;4)-beta-D-GlcNAc-(1-&gt;4)-beta-D-GlcNAc}-L-asparaginyl-[protein] + UDP + H(+). It catalyses the reaction an N(4)-{beta-D-GlcNAc-(1-&gt;2)-alpha-D-Man-(1-&gt;3)-[beta-D-GlcNAc-(1-&gt;2)-[beta-D-GlcNAc-(1-&gt;6)]-alpha-D-Man-(1-&gt;6)]-beta-D-Man-(1-&gt;4)-beta-D-GlcNAc-(1-&gt;4)-beta-D-GlcNAc}-L-asparaginyl-[protein] + UDP-N-acetyl-alpha-D-glucosamine = an N(4)-{beta-D-GlcNAc-(1-&gt;2)-[beta-D-GlcNAc-(1-&gt;4)]-alpha-D-Man-(1-&gt;3)-[beta-D-GlcNAc-(1-&gt;2)-[beta-D-GlcNAc-(1-&gt;6)]-alpha-D-Man-(1-&gt;6)]-beta-D-Man-(1-&gt;4)-beta-D-GlcNAc-(1-&gt;4)-beta-D-GlcNAc}-L-asparaginyl-[protein] + UDP + H(+). The catalysed reaction is an N(4)-{beta-D-GlcNAc-(1-&gt;2)-alpha-D-Man-(1-&gt;3)-[beta-D-GlcNAc-(1-&gt;2)-alpha-D-Man-(1-&gt;6)]-beta-D-Man-(1-&gt;4)-beta-D-GlcNAc-(1-&gt;4)-[alpha-L-Fuc-(1-&gt;6)]-beta-D-GlcNAc}-L-asparaginyl-[protein] + UDP-N-acetyl-alpha-D-glucosamine = N(4)-{beta-D-GlcNAc-(1-&gt;2)-[beta-D-GlcNAc-(1-&gt;4)]-alpha-D-Man-(1-&gt;3)-[beta-D-GlcNAc-(1-&gt;2)-alpha-D-Man-(1-&gt;6)]-beta-D-Man-(1-&gt;4)-beta-D-GlcNAc-(1-&gt;4)-[alpha-L-Fuc-(1-&gt;6)]-beta-D-GlcNAc}-asparaginyl-[protein] + UDP + H(+). The enzyme catalyses an N(4)-{beta-D-GlcNAc-(1-&gt;2)-alpha-D-Man-(1-&gt;3)-[beta-D-Gal-(1-&gt;4)-beta-D-GlcNAc-(1-&gt;2)-alpha-D-Man-(1-&gt;6)]-beta-D-Man-(1-&gt;4)-beta-D-GlcNAc-(1-&gt;4)-beta-D-GlcNAc}-L-asparaginyl-[protein] + UDP-N-acetyl-alpha-D-glucosamine = an N(4)-{beta-D-GlcNAc-(1-&gt;2)-[beta-D-GlcNAc-(1-&gt;4)]-alpha-D-Man-(1-&gt;3)-[beta-D-Gal-(1-&gt;4)-beta-D-GlcNAc-(1-&gt;2)-alpha-D-Man-(1-&gt;6)]-beta-D-Man-(1-&gt;4)-beta-D-GlcNAc-(1-&gt;4)-beta-D-GlcNAc}-L-asparaginyl-[protein] + UDP + H(+). It carries out the reaction N(4)-{beta-D-GlcNAc-(1-&gt;2)-alpha-D-Man-(1-&gt;3)-[alpha-D-Man-(1-&gt;3)-{alpha-D-Man-(1-&gt;6)}-alpha-D-Man-(1-&gt;6)]-beta-D-Man-(1-&gt;4)-beta-D-GlcNAc-(1-&gt;4)-beta-D-GlcNAc}-asparaginyl-[protein] + UDP-N-acetyl-alpha-D-glucosamine = N(4)-{beta-D-GlcNAc-(1-&gt;2)-[beta-D-GlcNAc-(1-&gt;4)]-alpha-D-Man-(1-&gt;3)-[alpha-D-Man-(1-&gt;3)-{alpha-D-Man-(1-&gt;6)}-alpha-D-Man-(1-&gt;6)]-beta-D-Man-(1-&gt;4)-beta-D-GlcNAc-(1-&gt;4)-beta-D-GlcNAc}-asparaginyl-[protein] + UDP + H(+). It catalyses the reaction N(4)-{beta-D-GlcNAc-(1-&gt;2)-alpha-D-Man-(1-&gt;3)-beta-D-Man-(1-&gt;4)-beta-D-GlcNAc-(1-&gt;4)-beta-D-GlcNAc}-asparaginyl-[protein] + UDP-N-acetyl-alpha-D-glucosamine = N(4)-{beta-D-GlcNAc-(1-&gt;2)-[beta-D-GlcNAc-(1-&gt;4)]-alpha-D-Man-(1-&gt;3)-beta-D-Man-(1-&gt;4)-beta-D-GlcNAc-(1-&gt;4)-beta-D-GlcNAc}-asparaginyl-[protein] + UDP + H(+). Its pathway is protein modification; protein glycosylation. Its activity is regulated as follows. Inhibited by UDP. Its function is as follows. Glycosyltransferase that catalyze the transfer of GlcNAc from UDP-GlcNAc to the GlcNAcbeta1-2Manalpha1-3 arm of the core structure of N-linked glycans through a beta1-4 linkage and participates in the production of tri- and tetra-antennary N-linked sugar chains. Involved in glucose transport by mediating SLC2A2/GLUT2 glycosylation, thereby controlling cell-surface expression of SLC2A2 in pancreatic beta cells. This is Alpha-1,3-mannosyl-glycoprotein 4-beta-N-acetylglucosaminyltransferase A from Rattus norvegicus (Rat).